A 681-amino-acid chain; its full sequence is Heat shock 70 kDa protein (681 aa).

Gly residues predominate over residues 655 to 665; sequence NFPGGMPGAGM. Residues 655-681 form a disordered region; that stretch reads NFPGGMPGAGMPGNAPAGSGPTVEEVD. The segment covering 666–675 has biased composition (low complexity); that stretch reads PGNAPAGSGP.

Belongs to the heat shock protein 70 family.

The polypeptide is Heat shock 70 kDa protein (Plasmodium falciparum).